We begin with the raw amino-acid sequence, 695 residues long: Cysteine-rich receptor-like protein kinase 6 (695 aa).

Residues 1–31 form the signal peptide; the sequence is MRRHRPYLDGVAAAAATFLLAVLLHAPLAAG. Over 32 to 294 the chain is Extracellular; sequence EDEPPPWVLC…ATSGEKTKNR (263 aa). Gnk2-homologous domains lie at 38–142 and 151–261; these read WVLC…NRDF and TTYT…VFPF. N49, N53, N70, and N101 each carry an N-linked (GlcNAc...) asparagine glycan. 2 disulfide bridges follow: C96–C105 and C108–C133. A glycan (N-linked (GlcNAc...) asparagine) is linked at N178. Cystine bridges form between C215-C224 and C227-C252. A helical membrane pass occupies residues 295-315; it reads IGTVLAIVMPAIAAILLMVVA. Residues 316–695 lie on the Cytoplasmic side of the membrane; it reads CFCCWKRIKK…DLSITELVPR (380 aa). The 272-residue stretch at 363-634 folds into the Protein kinase domain; it reads FADTKMIGQG…PTISSVNIML (272 aa). ATP-binding positions include 369–377 and K391; that span reads IGQGGFGMV. The Proton acceptor role is filled by D488. The segment at 658–682 is disordered; it reads DSSNPYSERYPRPRHSGYSDNSTVV.

This sequence belongs to the protein kinase superfamily. Ser/Thr protein kinase family. CRK subfamily.

It localises to the membrane. In terms of biological role, involved in disease resistance. Required for NPR1/NH1-mediated immunity to the bacterial blight pathogen Xanthomomas oryzae pv. oryzae (Xoo). Required for the benzothiadiazole (BTH)-induced immune response. Possesses kinase activity in vitro. The chain is Cysteine-rich receptor-like protein kinase 6 from Oryza sativa subsp. japonica (Rice).